The following is a 240-amino-acid chain: Ribonuclease 3 (240 aa).

In terms of domain architecture, RNase III spans 9–141 (VEEFQKETGI…LLAAIYLDQG (133 aa)). A Mg(2+)-binding site is contributed by Glu-54. The active site involves Asp-58. Mg(2+) is bound by residues Asp-127 and Glu-130. The active site involves Glu-130. Residues 168–237 (DYKTALQEIV…ARIAYEKLLK (70 aa)) form the DRBM domain.

This sequence belongs to the ribonuclease III family. As to quaternary structure, homodimer. The cofactor is Mg(2+).

It is found in the cytoplasm. It carries out the reaction Endonucleolytic cleavage to 5'-phosphomonoester.. Its function is as follows. Digests double-stranded RNA. Involved in the processing of primary rRNA transcript to yield the immediate precursors to the large and small rRNAs (23S and 16S). Also processes some mRNAs, and tRNAs when they are encoded in the rRNA operon. Probably processes pre-crRNA and tracrRNA of type II CRISPR loci if present in the organism. This is Ribonuclease 3 (rnc) from Thermotoga maritima (strain ATCC 43589 / DSM 3109 / JCM 10099 / NBRC 100826 / MSB8).